The primary structure comprises 188 residues: E3 ubiquitin-protein ligase RNF183 (188 aa).

Residues 1 to 157 (MAEQQGREPE…RECFRNPHFR (157 aa)) are Cytoplasmic-facing. The segment at 11-58 (CPVCWNPFNNTFHTPKVLDCCHSFCVECLAHISLVTPTRRRLLCPLCR) adopts an RING-type zinc-finger fold. The chain crosses the membrane as a helical; Anchor for type IV membrane protein span at residues 158-178 (IFAYMMAVILCGTVLFIFSIF). Residues 179–188 (CTRRFFWGVG) lie on the Lumenal side of the membrane.

Interacts with FATE1. Interacts with SEC16A. Interacts with BCL2L1. In terms of processing, autoubiquitinated (in vitro).

It localises to the endoplasmic reticulum membrane. Its subcellular location is the endoplasmic reticulum. It is found in the golgi apparatus. The protein resides in the cis-Golgi network membrane. The protein localises to the lysosome. It carries out the reaction S-ubiquitinyl-[E2 ubiquitin-conjugating enzyme]-L-cysteine + [acceptor protein]-L-lysine = [E2 ubiquitin-conjugating enzyme]-L-cysteine + N(6)-ubiquitinyl-[acceptor protein]-L-lysine.. It functions in the pathway protein modification; protein ubiquitination. Its function is as follows. Acts as an E3 ubiquitin ligase catalyzing the covalent attachment of ubiquitin moieties onto substrate proteins. Triggers apoptosis in response to prolonged ER stress by mediating the polyubiquitination and subsequent proteasomal degradation of BCL2L1. May collaborate with FATE1 to restrain BIK protein levels thus regulating apoptotic signaling. The chain is E3 ubiquitin-protein ligase RNF183 (RNF183) from Bos taurus (Bovine).